We begin with the raw amino-acid sequence, 269 residues long: Cytochrome c oxidase subunit 3 (269 aa).

The next 7 membrane-spanning stretches (helical) occupy residues 21–41 (PWPI…ALTM), 45–65 (IGHM…ATLW), 90–110 (GFLL…WAYF), 138–160 (PLLN…HGLV), 167–187 (ALSG…CQYI), 205–225 (FYAG…MLGI), and 247–267 (VLYC…FYWW).

It belongs to the cytochrome c oxidase subunit 3 family. In terms of assembly, component of the cytochrome c oxidase (complex IV, CIV), a multisubunit enzyme composed of a catalytic core of 3 subunits and several supernumerary subunits. The complex exists as a monomer or a dimer and forms supercomplexes (SCs) in the inner mitochondrial membrane with ubiquinol-cytochrome c oxidoreductase (cytochrome b-c1 complex, complex III, CIII).

The protein localises to the mitochondrion inner membrane. It catalyses the reaction 4 Fe(II)-[cytochrome c] + O2 + 8 H(+)(in) = 4 Fe(III)-[cytochrome c] + 2 H2O + 4 H(+)(out). Its function is as follows. Component of the cytochrome c oxidase, the last enzyme in the mitochondrial electron transport chain which drives oxidative phosphorylation. The respiratory chain contains 3 multisubunit complexes succinate dehydrogenase (complex II, CII), ubiquinol-cytochrome c oxidoreductase (cytochrome b-c1 complex, complex III, CIII) and cytochrome c oxidase (complex IV, CIV), that cooperate to transfer electrons derived from NADH and succinate to molecular oxygen, creating an electrochemical gradient over the inner membrane that drives transmembrane transport and the ATP synthase. Cytochrome c oxidase is the component of the respiratory chain that catalyzes the reduction of oxygen to water. Electrons originating from reduced cytochrome c in the intermembrane space (IMS) are transferred via the dinuclear copper A center (CU(A)) of subunit 2 and heme A of subunit 1 to the active site in subunit 1, a binuclear center (BNC) formed by heme A3 and copper B (CU(B)). The BNC reduces molecular oxygen to 2 water molecules using 4 electrons from cytochrome c in the IMS and 4 protons from the mitochondrial matrix. The sequence is that of Cytochrome c oxidase subunit 3 (COX3) from Kluyveromyces lactis (strain ATCC 8585 / CBS 2359 / DSM 70799 / NBRC 1267 / NRRL Y-1140 / WM37) (Yeast).